Consider the following 409-residue polypeptide: Elongation factor Tu, plastid (409 aa).

Residues Lys-10–Ile-214 enclose the tr-type G domain. The tract at residues Gly-19–Thr-26 is G1. Gly-19 to Thr-26 serves as a coordination point for GTP. Thr-26 contributes to the Mg(2+) binding site. The tract at residues Gly-60–Asn-64 is G2. A G3 region spans residues Asp-81–Gly-84. Residues Asp-81–His-85 and Asn-136–Asp-139 each bind GTP. The G4 stretch occupies residues Asn-136 to Asp-139. The interval Ser-174–Leu-176 is G5.

Belongs to the TRAFAC class translation factor GTPase superfamily. Classic translation factor GTPase family. EF-Tu/EF-1A subfamily.

Its subcellular location is the plastid. The enzyme catalyses GTP + H2O = GDP + phosphate + H(+). Functionally, GTP hydrolase that promotes the GTP-dependent binding of aminoacyl-tRNA to the A-site of ribosomes during protein biosynthesis. The polypeptide is Elongation factor Tu, plastid (tufA) (Euglena longa (Euglenophycean alga)).